Consider the following 1361-residue polypeptide: Rho guanine nucleotide exchange factor 18 (1361 aa).

3 disordered regions span residues 33–88 (LQDL…SCSE), 131–156 (SGGG…SRSV), and 244–292 (DGAG…ARER). A compositionally biased stretch (basic and acidic residues) spans 50 to 61 (PDSRPTGEEPGR). Over residues 64 to 73 (LFSSLAGSQD) the composition is skewed to polar residues. The segment covering 74–88 (LSRRRSWERSRSCSE) has biased composition (basic and acidic residues). Composition is skewed to basic and acidic residues over residues 245 to 256 (GAGKNEKSDKST) and 271 to 292 (RQKE…ARER). The segment at 310–334 (SSCPLCGKPFLSSASLKEHPRGTLL) adopts a C2H2-type; degenerate zinc-finger fold. Residues 348 to 368 (TVSQKGGPQPTPSPAGPGTQL) are disordered. One can recognise a DH domain in the interval 447–644 (KRQDVLYELM…KDIISQVDAK (198 aa)). The region spanning 684–786 (QLHLEGMLCW…WMAHIQRAVE (103 aa)) is the PH domain. Disordered regions lie at residues 893–980 (ANGQ…DPRL), 1143–1211 (LKKQ…RLAK), 1229–1264 (AAVQ…SSAS), and 1277–1361 (MGKD…VIFF). T912 is subject to Phosphothreonine. Position 921 is a phosphoserine (S921). Residues 1038 to 1148 (LEQERQRNFE…LLRRLKKQNT (111 aa)) are a coiled coil. The span at 1191 to 1211 (YAERPEVARRDSAPTENRLAK) shows a compositional bias: basic and acidic residues. Residues 1254-1264 (RGSQRWESSAS) show a composition bias toward polar residues. S1289 and S1291 each carry phosphoserine. 2 stretches are compositionally biased toward pro residues: residues 1300–1317 (PAPP…PPAD) and 1334–1344 (PGPPAPSPLPA). Positions 1349–1361 (AKEDASKEDVIFF) are enriched in basic and acidic residues.

Interacts with SEPT9; the interaction may inhibit GEF activity. Interacts with Gbetagamma subunits GNB1 and GNG2. Interacts with EPB41L4B. Interacts with PATJ (via C-terminus). Expressed in all tissues tested with highest expression in kidney and pancreas. Weakly or not expressed in liver, skeletal muscle and testis. Isoform 1: Expressed in eosinophils. Isoform 2: Expressed in eosinophils. Isoform 3: Expressed in eosinophils. Isoform 4: Not detected in eosinophils.

Its subcellular location is the cytoplasm. The protein localises to the cytoskeleton. The protein resides in the cell membrane. It is found in the apical cell membrane. In terms of biological role, acts as a guanine nucleotide exchange factor (GEF) for RhoA GTPases. Its activation induces formation of actin stress fibers. Also acts as a GEF for RAC1, inducing production of reactive oxygen species (ROS). Does not act as a GEF for CDC42. The G protein beta-gamma (Gbetagamma) subunits of heterotrimeric G proteins act as activators, explaining the integrated effects of LPA and other G-protein coupled receptor agonists on actin stress fiber formation, cell shape change and ROS production. Required for EPB41L4B-mediated regulation of the circumferential actomyosin belt in epithelial cells. The protein is Rho guanine nucleotide exchange factor 18 (ARHGEF18) of Homo sapiens (Human).